We begin with the raw amino-acid sequence, 263 residues long: Carbon monoxide dehydrogenase accessory protein CooC (263 aa).

7-14 (GKGGVGKS) provides a ligand contact to ATP.

Its function is as follows. Involved in the insertion of nickel into the carbon monoxide dehydrogenase (CODH). This is Carbon monoxide dehydrogenase accessory protein CooC (cooC) from Rhodospirillum rubrum.